A 329-amino-acid chain; its full sequence is MPKLNSTFVTEFLFEGFSSFRRQHKLVFFVVFLTLYLLTLSGNVIIMTIIRLDHHLHTPMYFFLCMLSISETCYTVAIIPHMLSGLLNPHQPIATQSCATQLFFYLTFGINNCFLLTVMGYDRYVAICNPLRYSVIMGKRACIQLASGSLGIGLGMAIVQVTSVFGLPFCDAFVISHFFCDVRHLLKLACTDTTVNEIINFVVSVCVLVLPMGLVFISYVLIISTILKIASAEGQKKAFATCASHLTVVIIHYGCASIIYLKPKSQSSLGQDRLISVTYTHHSPTEPCCVQPEEQGGQRCSAQSRGAKNSVSLMKRGCEGFSFAFINMY.

Topologically, residues 1–26 are extracellular; sequence MPKLNSTFVTEFLFEGFSSFRRQHKL. An N-linked (GlcNAc...) asparagine glycan is attached at Asn-5. A helical membrane pass occupies residues 27 to 47; that stretch reads VFFVVFLTLYLLTLSGNVIIM. Residues 48–55 lie on the Cytoplasmic side of the membrane; that stretch reads TIIRLDHH. The chain crosses the membrane as a helical span at residues 56 to 76; that stretch reads LHTPMYFFLCMLSISETCYTV. Topologically, residues 77-100 are extracellular; it reads AIIPHMLSGLLNPHQPIATQSCAT. Residues Cys-98 and Cys-190 are joined by a disulfide bond. The chain crosses the membrane as a helical span at residues 101–121; it reads QLFFYLTFGINNCFLLTVMGY. At 122–140 the chain is on the cytoplasmic side; it reads DRYVAICNPLRYSVIMGKR. The chain crosses the membrane as a helical span at residues 141-161; the sequence is ACIQLASGSLGIGLGMAIVQV. The Extracellular segment spans residues 162 to 198; that stretch reads TSVFGLPFCDAFVISHFFCDVRHLLKLACTDTTVNEI. Residues 199–218 form a helical membrane-spanning segment; it reads INFVVSVCVLVLPMGLVFIS. Residues 219 to 238 are Cytoplasmic-facing; the sequence is YVLIISTILKIASAEGQKKA. Residues 239–259 traverse the membrane as a helical segment; sequence FATCASHLTVVIIHYGCASII. Topologically, residues 260 to 272 are extracellular; the sequence is YLKPKSQSSLGQD. Residues 273–293 traverse the membrane as a helical segment; sequence RLISVTYTHHSPTEPCCVQPE. Residues 294-329 lie on the Cytoplasmic side of the membrane; sequence EQGGQRCSAQSRGAKNSVSLMKRGCEGFSFAFINMY.

The protein belongs to the G-protein coupled receptor 1 family.

The protein resides in the cell membrane. Its function is as follows. Odorant receptor. The chain is Olfactory receptor 10J3 (OR10J3) from Homo sapiens (Human).